The sequence spans 320 residues: Cytochrome f (320 aa).

Residues 1 to 35 (MQNRNTFSWVKDQMSRFISVSIMIYVITRTSISNA) form the signal peptide. Heme is bound by residues Tyr36, Cys56, Cys59, and His60. Residues 286-306 (VQGLLFFFASVILAQIFLVLK) form a helical membrane-spanning segment.

It belongs to the cytochrome f family. In terms of assembly, the 4 large subunits of the cytochrome b6-f complex are cytochrome b6, subunit IV (17 kDa polypeptide, petD), cytochrome f and the Rieske protein, while the 4 small subunits are PetG, PetL, PetM and PetN. The complex functions as a dimer. Heme is required as a cofactor.

It is found in the plastid. The protein localises to the chloroplast thylakoid membrane. Component of the cytochrome b6-f complex, which mediates electron transfer between photosystem II (PSII) and photosystem I (PSI), cyclic electron flow around PSI, and state transitions. This Ceratophyllum demersum (Rigid hornwort) protein is Cytochrome f.